The primary structure comprises 482 residues: Putative transposase R186 (482 aa).

Zn(2+) contacts are provided by cysteine 416, cysteine 419, cysteine 433, and cysteine 435.

This sequence in the central section; belongs to the transposase 2 family. In the C-terminal section; belongs to the transposase 35 family.

The protein is Putative transposase R186 of Acanthamoeba polyphaga (Amoeba).